The primary structure comprises 380 residues: S-adenosylmethionine:tRNA ribosyltransferase-isomerase (380 aa).

Residues 1–15 (MHSKHPTDTARRCET) show a composition bias toward basic and acidic residues. The tract at residues 1-24 (MHSKHPTDTARRCETGTDSSDTAA) is disordered.

It belongs to the QueA family. Monomer.

It localises to the cytoplasm. It carries out the reaction 7-aminomethyl-7-carbaguanosine(34) in tRNA + S-adenosyl-L-methionine = epoxyqueuosine(34) in tRNA + adenine + L-methionine + 2 H(+). The protein operates within tRNA modification; tRNA-queuosine biosynthesis. Transfers and isomerizes the ribose moiety from AdoMet to the 7-aminomethyl group of 7-deazaguanine (preQ1-tRNA) to give epoxyqueuosine (oQ-tRNA). The protein is S-adenosylmethionine:tRNA ribosyltransferase-isomerase of Oleidesulfovibrio alaskensis (strain ATCC BAA-1058 / DSM 17464 / G20) (Desulfovibrio alaskensis).